Consider the following 179-residue polypeptide: Translationally-controlled tumor protein homolog (179 aa).

The TCTP domain occupies 1–179 (MIIYKDIISG…WKHGLEEMKV (179 aa)).

It belongs to the TCTP family.

It is found in the cytoplasm. Its subcellular location is the cytoskeleton. Functionally, involved in protein synthesis. Involved in microtubule stabilization. Involved in osmoadaptation. The polypeptide is Translationally-controlled tumor protein homolog (Emericella nidulans (strain FGSC A4 / ATCC 38163 / CBS 112.46 / NRRL 194 / M139) (Aspergillus nidulans)).